The primary structure comprises 361 residues: Beta-hexosaminidase (361 aa).

Substrate contacts are provided by residues D69, R77, R144, and 174-175 (KH). H187 serves as the catalytic Proton donor/acceptor. D258 serves as the catalytic Nucleophile.

It belongs to the glycosyl hydrolase 3 family. NagZ subfamily.

Its subcellular location is the cytoplasm. The enzyme catalyses Hydrolysis of terminal non-reducing N-acetyl-D-hexosamine residues in N-acetyl-beta-D-hexosaminides.. Its pathway is cell wall biogenesis; peptidoglycan recycling. Its function is as follows. Plays a role in peptidoglycan recycling by cleaving the terminal beta-1,4-linked N-acetylglucosamine (GlcNAc) from peptide-linked peptidoglycan fragments, giving rise to free GlcNAc, anhydro-N-acetylmuramic acid and anhydro-N-acetylmuramic acid-linked peptides. This chain is Beta-hexosaminidase, found in Neisseria meningitidis serogroup A / serotype 4A (strain DSM 15465 / Z2491).